The chain runs to 142 residues: Large ribosomal subunit protein uL13 (142 aa).

It belongs to the universal ribosomal protein uL13 family. In terms of assembly, part of the 50S ribosomal subunit.

This protein is one of the early assembly proteins of the 50S ribosomal subunit, although it is not seen to bind rRNA by itself. It is important during the early stages of 50S assembly. The chain is Large ribosomal subunit protein uL13 from Pseudomonas fluorescens (strain Pf0-1).